The sequence spans 223 residues: HTH-type transcriptional dual regulator CecR (223 aa).

The 60-residue stretch at 11 to 70 folds into the HTH tetR-type domain; the sequence is EQAKKQLIAAALAQFGEYGMNATTREIAAQAGQNIAAITYYFGSKEDLYLACAQWIADFI. The segment at residues 33–52 is a DNA-binding region (H-T-H motif); the sequence is TTREIAAQAGQNIAAITYYF.

It is found in the cytoplasm. Functionally, regulates transcription of the cecR-ybhGFSR operon and the rhlE gene, which altogether are involved in the control of sensitivity to cefoperazone and chloramphenicol. Represses the cecR-ybhGFSR operon and activates the rhlE operon. Acts by binding to a palindromic sequence within the intergenic spacer located between these two divergently transcribed operons. This Shigella flexneri protein is HTH-type transcriptional dual regulator CecR.